The sequence spans 256 residues: Small ribosomal subunit protein eS1 (256 aa).

N-acetylalanine; partial is present on alanine 2.

It belongs to the eukaryotic ribosomal protein eS1 family. As to quaternary structure, component of the small ribosomal subunit. Mature ribosomes consist of a small (40S) and a large (60S) subunit. The 40S subunit contains about 33 different proteins and 1 molecule of RNA (18S). The 60S subunit contains about 49 different proteins and 3 molecules of RNA (25S, 5.8S and 5S).

It is found in the cytoplasm. This Komagataella phaffii (strain GS115 / ATCC 20864) (Yeast) protein is Small ribosomal subunit protein eS1.